A 141-amino-acid chain; its full sequence is MTVERTFSIIKPNAVANNDIGAIYARFERAGFKIIASKMLRLTREQAEGFYAEHKGRPFFDGLVEFMTSGPIVVQVLEAENAVQRNRDIMGATNPDNALAGTLRADYADSFTANAVHGSDAVESAQREIAYFFNESEICSR.

ATP contacts are provided by Lys-11, Phe-59, Arg-87, Thr-93, Arg-104, and Asn-114. The active-site Pros-phosphohistidine intermediate is His-117.

It belongs to the NDK family. As to quaternary structure, homotetramer. Mg(2+) serves as cofactor.

The protein resides in the cytoplasm. It catalyses the reaction a 2'-deoxyribonucleoside 5'-diphosphate + ATP = a 2'-deoxyribonucleoside 5'-triphosphate + ADP. The enzyme catalyses a ribonucleoside 5'-diphosphate + ATP = a ribonucleoside 5'-triphosphate + ADP. Major role in the synthesis of nucleoside triphosphates other than ATP. The ATP gamma phosphate is transferred to the NDP beta phosphate via a ping-pong mechanism, using a phosphorylated active-site intermediate. This chain is Nucleoside diphosphate kinase, found in Serratia proteamaculans (strain 568).